A 497-amino-acid polypeptide reads, in one-letter code: Serine/arginine-rich protein PSR (497 aa).

The signal sequence occupies residues 1 to 19; sequence MYSRCIALVFVGLLASSLA. The Extracellular portion of the chain corresponds to 20-366; it reads ANCYGPAGKL…HHGLSSQKLG (347 aa). Residues asparagine 92, asparagine 193, asparagine 202, asparagine 261, and asparagine 283 are each glycosylated (N-linked (GlcNAc...) asparagine). The helical transmembrane segment at 367-387 threads the bilayer; sequence LAIGLPIAGVFLIILIAAAII. Residues 388–497 lie on the Cytoplasmic side of the membrane; it reads YYRKRRESEK…ESASRDSDSD (110 aa). Residues 424-450 form a necessary for phosphorylation by PSRPK in vitro region; the sequence is MGSKTMQAMLDMRDDDESEHDSDDGYG. The span at 436–447 shows a compositional bias: acidic residues; sequence RDDDESEHDSDD. The disordered stretch occupies residues 436 to 497; sequence RDDDESEHDS…ESASRDSDSD (62 aa). Residues 459 to 471 show a composition bias toward basic residues; it reads GRSRSRSRSRSVS. A compositionally biased stretch (basic and acidic residues) spans 476-497; the sequence is GSRDARSESDPGESASRDSDSD.

Phosphorylated on serine residues in the RS domain by PSRPK.

It is found in the membrane. The sequence is that of Serine/arginine-rich protein PSR from Physarum polycephalum (Slime mold).